A 345-amino-acid polypeptide reads, in one-letter code: Probable deoxyhypusine synthase 2 (345 aa).

Lys-292 serves as the catalytic Nucleophile.

Belongs to the deoxyhypusine synthase family. NAD(+) is required as a cofactor.

It catalyses the reaction [eIF5A protein]-L-lysine + spermidine = [eIF5A protein]-deoxyhypusine + propane-1,3-diamine. Its pathway is protein modification; eIF5A hypusination. In terms of biological role, catalyzes the NAD-dependent oxidative cleavage of spermidine and the subsequent transfer of the butylamine moiety of spermidine to the epsilon-amino group of a specific lysine residue of the eIF-5A precursor protein to form the intermediate deoxyhypusine residue. The chain is Probable deoxyhypusine synthase 2 (dys2) from Methanosarcina mazei (strain ATCC BAA-159 / DSM 3647 / Goe1 / Go1 / JCM 11833 / OCM 88) (Methanosarcina frisia).